Here is a 295-residue protein sequence, read N- to C-terminus: GTPase Era (295 aa).

An Era-type G domain is found at 7 to 176 (KTISVCIIGR…IKSKAKVSPW (170 aa)). The segment at 15-22 (GRPNSGKS) is G1. 15 to 22 (GRPNSGKS) serves as a coordination point for GTP. Positions 41–45 (QTTRS) are G2. The segment at 62–65 (DTPG) is G3. Residues 62–66 (DTPGI) and 124–127 (NKID) contribute to the GTP site. A G4 region spans residues 124-127 (NKID). Positions 152-154 (ISA) are G5. The KH type-2 domain maps to 204–281 (LQQELPYKLT…HLFLFVKVHA (78 aa)).

The protein belongs to the TRAFAC class TrmE-Era-EngA-EngB-Septin-like GTPase superfamily. Era GTPase family. In terms of assembly, monomer.

The protein localises to the cytoplasm. It is found in the cell inner membrane. In terms of biological role, an essential GTPase that binds both GDP and GTP, with rapid nucleotide exchange. Plays a role in 16S rRNA processing and 30S ribosomal subunit biogenesis and possibly also in cell cycle regulation and energy metabolism. The chain is GTPase Era from Rickettsia typhi (strain ATCC VR-144 / Wilmington).